We begin with the raw amino-acid sequence, 256 residues long: L-erythrulose-1-phosphate isomerase (256 aa).

Histidine 96 (electrophile) is an active-site residue. Glutamate 169 (proton acceptor) is an active-site residue. 2 residues coordinate substrate: glycine 175 and serine 212.

This sequence belongs to the triosephosphate isomerase family. As to quaternary structure, homodimer.

The protein localises to the cytoplasm. The catalysed reaction is L-erythrulose 1-phosphate = D-erythrulose 4-phosphate. It participates in carbohydrate metabolism; erythritol degradation. Functionally, catalyzes the isomerization of D-erythrulose-4P to L-erythrulose-1P. Involved in the degradation pathway of erythritol, that allows B.abortus to grow on this compound as the sole carbon source. This Brucella abortus (strain 2308) protein is L-erythrulose-1-phosphate isomerase.